The primary structure comprises 328 residues: Peroxidase 25 (328 aa).

The signal sequence occupies residues 1–26 (MGVYLGKYCYIMIIMLVLVLGKEVRS). Disulfide bonds link C38–C114, C71–C76, C120–C324, and C198–C230. H69 acts as the Proton acceptor in catalysis. Positions 70, 73, 75, 77, and 79 each coordinate Ca(2+). Substrate is bound at residue P161. H191 contacts heme b. A Ca(2+)-binding site is contributed by T192. A glycan (N-linked (GlcNAc...) asparagine) is linked at N207. Ca(2+) contacts are provided by D243, S246, and D251.

The protein belongs to the peroxidase family. Classical plant (class III) peroxidase subfamily. Heme b is required as a cofactor. The cofactor is Ca(2+).

It localises to the secreted. The enzyme catalyses 2 a phenolic donor + H2O2 = 2 a phenolic radical donor + 2 H2O. Its function is as follows. Removal of H(2)O(2), oxidation of toxic reductants, biosynthesis and degradation of lignin, suberization, auxin catabolism, response to environmental stresses such as wounding, pathogen attack and oxidative stress. These functions might be dependent on each isozyme/isoform in each plant tissue. In Arabidopsis thaliana (Mouse-ear cress), this protein is Peroxidase 25 (PER25).